The following is a 173-amino-acid chain: Photosystem I assembly protein Ycf3 (173 aa).

3 TPR repeats span residues Ala35 to Pro68, Ser72 to Met105, and Ala113 to Ala146.

The protein belongs to the Ycf3 family.

It is found in the cellular thylakoid membrane. In terms of biological role, essential for the assembly of the photosystem I (PSI) complex. May act as a chaperone-like factor to guide the assembly of the PSI subunits. This is Photosystem I assembly protein Ycf3 from Thermosynechococcus vestitus (strain NIES-2133 / IAM M-273 / BP-1).